We begin with the raw amino-acid sequence, 236 residues long: Uridylate kinase (236 aa).

10 to 11 (GS) is an ATP binding site. Gly-44 provides a ligand contact to UMP. The ATP site is built by Gly-45 and Arg-49. Residues Asp-66 and 114–120 (ITPGQTT) each bind UMP. ATP contacts are provided by Thr-140, Tyr-146, and Asp-149.

Belongs to the UMP kinase family. As to quaternary structure, homohexamer.

The protein localises to the cytoplasm. The enzyme catalyses UMP + ATP = UDP + ADP. It functions in the pathway pyrimidine metabolism; CTP biosynthesis via de novo pathway; UDP from UMP (UMPK route): step 1/1. Its activity is regulated as follows. Inhibited by UTP. Catalyzes the reversible phosphorylation of UMP to UDP. This chain is Uridylate kinase, found in Methanospirillum hungatei JF-1 (strain ATCC 27890 / DSM 864 / NBRC 100397 / JF-1).